Here is a 215-residue protein sequence, read N- to C-terminus: Probable GTP-binding protein EngB (215 aa).

Positions 30–204 (EGLEVAFAGR…QMVLAQWLGL (175 aa)) constitute an EngB-type G domain. GTP is bound by residues 38 to 45 (GRSNAGKS), 64 to 68 (GRTQL), 82 to 85 (DLPG), 149 to 152 (TKAD), and 182 to 185 (LFSA). 2 residues coordinate Mg(2+): Ser45 and Thr66.

The protein belongs to the TRAFAC class TrmE-Era-EngA-EngB-Septin-like GTPase superfamily. EngB GTPase family. Requires Mg(2+) as cofactor.

In terms of biological role, necessary for normal cell division and for the maintenance of normal septation. This Pseudomonas paraeruginosa (strain DSM 24068 / PA7) (Pseudomonas aeruginosa (strain PA7)) protein is Probable GTP-binding protein EngB.